We begin with the raw amino-acid sequence, 330 residues long: Complement factor H-related protein 3 (330 aa).

Positions 1–18 are cleaved as a signal peptide; the sequence is MLLLINVILTLWVSCANG. 5 consecutive Sushi domains span residues 22–84, 85–142, 144–205, 208–266, and 267–330; these read PCDF…VPCL, RKCY…RCIR, RTCS…ICIN, EKCG…RCIH, and PCII…PRCE. 6 disulfides stabilise this stretch: cysteine 23/cysteine 72, cysteine 55/cysteine 83, cysteine 87/cysteine 129, cysteine 114/cysteine 140, cysteine 146/cysteine 192, and cysteine 175/cysteine 203. Asparagine 108 carries an N-linked (GlcNAc...) asparagine glycan. Asparagine 185 and asparagine 205 each carry an N-linked (GlcNAc...) asparagine glycan. 4 cysteine pairs are disulfide-bonded: cysteine 210/cysteine 253, cysteine 239/cysteine 264, cysteine 268/cysteine 319, and cysteine 302/cysteine 329. Asparagine 309 carries an N-linked (GlcNAc...) asparagine glycan.

Expressed by the liver and secreted in plasma.

It is found in the secreted. Might be involved in complement regulation. This chain is Complement factor H-related protein 3 (CFHR3), found in Homo sapiens (Human).